We begin with the raw amino-acid sequence, 139 residues long: D-ribose pyranase (139 aa).

The Proton donor role is filled by H20. Substrate is bound by residues D28, H106, and 128–130 (YAN).

It belongs to the RbsD / FucU family. RbsD subfamily. Homodecamer.

Its subcellular location is the cytoplasm. The enzyme catalyses beta-D-ribopyranose = beta-D-ribofuranose. Its pathway is carbohydrate metabolism; D-ribose degradation; D-ribose 5-phosphate from beta-D-ribopyranose: step 1/2. Its function is as follows. Catalyzes the interconversion of beta-pyran and beta-furan forms of D-ribose. This Serratia proteamaculans (strain 568) protein is D-ribose pyranase.